The primary structure comprises 425 residues: Serine--tRNA ligase (425 aa).

Residue 227-229 coordinates L-serine; that stretch reads TAE. ATP is bound by residues 258 to 260 and V274; that span reads RRE. E281 lines the L-serine pocket. An ATP-binding site is contributed by 347–350; it reads ETHS. T382 is a binding site for L-serine.

It belongs to the class-II aminoacyl-tRNA synthetase family. Type-1 seryl-tRNA synthetase subfamily. As to quaternary structure, homodimer. The tRNA molecule binds across the dimer.

Its subcellular location is the cytoplasm. The catalysed reaction is tRNA(Ser) + L-serine + ATP = L-seryl-tRNA(Ser) + AMP + diphosphate + H(+). The enzyme catalyses tRNA(Sec) + L-serine + ATP = L-seryl-tRNA(Sec) + AMP + diphosphate + H(+). It functions in the pathway aminoacyl-tRNA biosynthesis; selenocysteinyl-tRNA(Sec) biosynthesis; L-seryl-tRNA(Sec) from L-serine and tRNA(Sec): step 1/1. Catalyzes the attachment of serine to tRNA(Ser). Is also able to aminoacylate tRNA(Sec) with serine, to form the misacylated tRNA L-seryl-tRNA(Sec), which will be further converted into selenocysteinyl-tRNA(Sec). The protein is Serine--tRNA ligase of Deinococcus radiodurans (strain ATCC 13939 / DSM 20539 / JCM 16871 / CCUG 27074 / LMG 4051 / NBRC 15346 / NCIMB 9279 / VKM B-1422 / R1).